A 114-amino-acid polypeptide reads, in one-letter code: Prostate stem cell antigen (114 aa).

The first 11 residues, 1–11 (MAGLALQPGTA), serve as a signal peptide directing secretion. The UPAR/Ly6 domain occupies 12 to 86 (LLCYSCKAQV…CCDTDLCNAS (75 aa)). Intrachain disulfides connect cysteine 14-cysteine 39, cysteine 17-cysteine 26, cysteine 32-cysteine 57, cysteine 61-cysteine 77, and cysteine 78-cysteine 83. N-linked (GlcNAc...) asparagine glycosylation is present at asparagine 31. Residue serine 86 is the site of GPI-anchor amidated serine attachment. Residues 86-114 (SGAHALQPAAAILALLPALGLLLWGPGQL) constitute a propeptide, removed in mature form.

Interacts with CHRNA4. In terms of processing, N-glycosylated. In terms of tissue distribution, highly expressed in prostate (basal, secretory and neuroendocrine epithelium cells). Also found in bladder (transitional epithelium), placenta (trophoblasts), stomach (neuroendocrine cells), colon (neuroendocrine cells) and kidney (collecting ducts). Overexpressed in prostate cancers and expression is correlated with tumor stage, grade and androgen-independence. Highly expressed in prostate cancer bone metastases. Expressed in gastric epithelial cells, mainly in the isthmus (at protein level). Not detected in normal intestinal epithelium (at protein level). Expressed in brain cortex; expression is significantly increased in the front cortex of Alzheimer disease patients.

It is found in the cell membrane. In terms of biological role, may be involved in the regulation of cell proliferation. Has a cell-proliferation inhibition activity in vitro. Functionally, may act as a modulator of nicotinic acetylcholine receptors (nAChRs) activity. In vitro inhibits nicotine-induced signaling probably implicating alpha-3:beta-2- or alpha-7-containing nAChRs. The sequence is that of Prostate stem cell antigen (PSCA) from Homo sapiens (Human).